The primary structure comprises 376 residues: D-alanine--D-alanine ligase (376 aa).

The 209-residue stretch at 150-358 (KIIFEKEGLP…YSELINKLIE (209 aa)) folds into the ATP-grasp domain. ATP is bound at residue 183 to 238 (EGRLTYPCFVKPSNAGSSVGVNKASDRESLVKALNIAAKNDRRILVEEFINGREIE). Mg(2+) contacts are provided by Asp-311, Glu-325, and Asn-327.

It belongs to the D-alanine--D-alanine ligase family. It depends on Mg(2+) as a cofactor. Requires Mn(2+) as cofactor.

Its subcellular location is the cytoplasm. It carries out the reaction 2 D-alanine + ATP = D-alanyl-D-alanine + ADP + phosphate + H(+). It functions in the pathway cell wall biogenesis; peptidoglycan biosynthesis. Cell wall formation. The chain is D-alanine--D-alanine ligase from Ruminiclostridium cellulolyticum (strain ATCC 35319 / DSM 5812 / JCM 6584 / H10) (Clostridium cellulolyticum).